We begin with the raw amino-acid sequence, 94 residues long: Small ribosomal subunit protein bS18c (94 aa).

The protein belongs to the bacterial ribosomal protein bS18 family. Part of the 30S ribosomal subunit.

It is found in the plastid. The protein resides in the chloroplast. This Manihot esculenta (Cassava) protein is Small ribosomal subunit protein bS18c.